The chain runs to 130 residues: Transcription antitermination protein NusB (130 aa).

Belongs to the NusB family.

Functionally, involved in transcription antitermination. Required for transcription of ribosomal RNA (rRNA) genes. Binds specifically to the boxA antiterminator sequence of the ribosomal RNA (rrn) operons. The sequence is that of Transcription antitermination protein NusB from Bacillus mycoides (strain KBAB4) (Bacillus weihenstephanensis).